The sequence spans 423 residues: Glutamyl-tRNA reductase (423 aa).

Substrate is bound by residues 49-52 (TCNR), Ser109, 114-116 (EGQ), and Gln120. Cys50 (nucleophile) is an active-site residue. 189 to 194 (GAGETG) contributes to the NADP(+) binding site.

The protein belongs to the glutamyl-tRNA reductase family. Homodimer.

It catalyses the reaction (S)-4-amino-5-oxopentanoate + tRNA(Glu) + NADP(+) = L-glutamyl-tRNA(Glu) + NADPH + H(+). Its pathway is porphyrin-containing compound metabolism; protoporphyrin-IX biosynthesis; 5-aminolevulinate from L-glutamyl-tRNA(Glu): step 1/2. It functions in the pathway porphyrin-containing compound metabolism; chlorophyll biosynthesis. Its function is as follows. Catalyzes the NADPH-dependent reduction of glutamyl-tRNA(Glu) to glutamate 1-semialdehyde (GSA). This chain is Glutamyl-tRNA reductase, found in Chlorobium limicola (strain DSM 245 / NBRC 103803 / 6330).